An 830-amino-acid polypeptide reads, in one-letter code: Leucine--tRNA ligase (830 aa).

Residues 34–44 (PYPSGNIHMGH) carry the 'HIGH' region motif. The 'KMSKS' region motif lies at 592 to 596 (KMSKS). Lys-595 contributes to the ATP binding site.

The protein belongs to the class-I aminoacyl-tRNA synthetase family.

Its subcellular location is the cytoplasm. It carries out the reaction tRNA(Leu) + L-leucine + ATP = L-leucyl-tRNA(Leu) + AMP + diphosphate. The sequence is that of Leucine--tRNA ligase from Ehrlichia ruminantium (strain Gardel).